We begin with the raw amino-acid sequence, 466 residues long: MINQDSIVALATPSGAGAIAVIRISGAEAVSIGNSVFKSIKNKDLTKQKTHTLHLGHIVDNGKTLDEVLVSVFKGPNSYTGEDTIEISCHGSTYIQQQIIQLLLRKGCRMADAGEFTLRAFLNGKLDLSQAEAVADLISSDNEASHHIAMQQMRGGFSNEIAKLREELLNFASLIELELDFAEEDVEFADRTQFHELLNRIEFVLKRLIDSFAVGNVIKNGIPVAIVGEPNVGKSTLLNALLNEERAIVSDIAGTTRDTIEDELVIGGIGFRFIDTAGIRETKDVVESIGIKKTFEKIDQAQVVIYLFDGLKFKASSSEFVSEIEQIKNKYPLKPLLIVVNKKDILSEDEVLNITQKLENLNAKLLLISAKQKIGVEELKNELLSFVNTGALRNNETIVTNTRHYDSLLKALDEIQKVKFGLETNLSSDLIALDIKEALYQFGLITGQVSNDELLGNIFANFCIGK.

(6S)-5-formyl-5,6,7,8-tetrahydrofolate-binding residues include R23, E86, and K125. Residues 221 to 388 form the TrmE-type G domain; that stretch reads GIPVAIVGEP…LKNELLSFVN (168 aa). Residue N231 coordinates K(+). GTP-binding positions include 231-236, 250-256, and 275-278; these read NVGKST, SDIAGTT, and DTAG. Position 235 (S235) interacts with Mg(2+). K(+) contacts are provided by S250, I252, and T255. T256 contacts Mg(2+). K466 contacts (6S)-5-formyl-5,6,7,8-tetrahydrofolate.

Belongs to the TRAFAC class TrmE-Era-EngA-EngB-Septin-like GTPase superfamily. TrmE GTPase family. Homodimer. Heterotetramer of two MnmE and two MnmG subunits. It depends on K(+) as a cofactor.

Its subcellular location is the cytoplasm. In terms of biological role, exhibits a very high intrinsic GTPase hydrolysis rate. Involved in the addition of a carboxymethylaminomethyl (cmnm) group at the wobble position (U34) of certain tRNAs, forming tRNA-cmnm(5)s(2)U34. The polypeptide is tRNA modification GTPase MnmE (Flavobacterium johnsoniae (strain ATCC 17061 / DSM 2064 / JCM 8514 / BCRC 14874 / CCUG 350202 / NBRC 14942 / NCIMB 11054 / UW101) (Cytophaga johnsonae)).